A 340-amino-acid polypeptide reads, in one-letter code: GTPase Obg (340 aa).

The Obg domain occupies 1 to 158 (MSFIDEAKVY…KWIILKLKII (158 aa)). The region spanning 159 to 325 (SDVGIIGLPN…LSILIKHINK (167 aa)) is the OBG-type G domain. Residues 165–172 (GLPNAGKS), 190–194 (FTTLE), 211–214 (DIPG), 278–281 (NKCD), and 306–308 (SSI) each bind GTP. Positions 172 and 192 each coordinate Mg(2+).

This sequence belongs to the TRAFAC class OBG-HflX-like GTPase superfamily. OBG GTPase family. Monomer. It depends on Mg(2+) as a cofactor.

Its subcellular location is the cytoplasm. Its function is as follows. An essential GTPase which binds GTP, GDP and possibly (p)ppGpp with moderate affinity, with high nucleotide exchange rates and a fairly low GTP hydrolysis rate. Plays a role in control of the cell cycle, stress response, ribosome biogenesis and in those bacteria that undergo differentiation, in morphogenesis control. This chain is GTPase Obg, found in Ehrlichia ruminantium (strain Gardel).